Reading from the N-terminus, the 98-residue chain is Ferredoxin-3 (98 aa).

2 4Fe-4S ferredoxin-type domains span residues 18 to 47 (FVEAVNQDKCIGCGRCFKACGRNVLILQAL) and 66 to 95 (VMSIIHPEYCIGCQACARACPKNCYTHSPL). [4Fe-4S] cluster is bound by residues Cys-27, Cys-30, Cys-33, Cys-37, Cys-75, Cys-78, Cys-81, and Cys-85.

Homodimer. Requires [4Fe-4S] cluster as cofactor.

In terms of biological role, ferredoxins are iron-sulfur proteins that transfer electrons in a wide variety of metabolic reactions. This chain is Ferredoxin-3 (fdxB), found in Trichormus variabilis (strain ATCC 29413 / PCC 7937) (Anabaena variabilis).